A 342-amino-acid chain; its full sequence is Isopentenyl-diphosphate delta-isomerase (342 aa).

Arg-11–Lys-12 provides a ligand contact to substrate. Residues Ser-68, Ser-69–Thr-71, Ser-99, and Asn-127 contribute to the FMN site. Ser-99–Arg-101 serves as a coordination point for substrate. Residue Gln-162 participates in substrate binding. Glu-163 contributes to the Mg(2+) binding site. Residues Lys-194, Thr-224, Gly-274–Lys-276, and Ala-295–Gly-296 contribute to the FMN site.

It belongs to the IPP isomerase type 2 family. In terms of assembly, homooctamer. Dimer of tetramers. Requires FMN as cofactor. It depends on NADPH as a cofactor. Mg(2+) serves as cofactor.

It is found in the cytoplasm. It catalyses the reaction isopentenyl diphosphate = dimethylallyl diphosphate. In terms of biological role, involved in the biosynthesis of isoprenoids. Catalyzes the 1,3-allylic rearrangement of the homoallylic substrate isopentenyl (IPP) to its allylic isomer, dimethylallyl diphosphate (DMAPP). This chain is Isopentenyl-diphosphate delta-isomerase, found in Rickettsia conorii (strain ATCC VR-613 / Malish 7).